The sequence spans 221 residues: GTP-binding nuclear protein Ran-2 (221 aa).

A Small GTPase Ran-type domain is found at 10–174 (DYPSFKLVIV…LYLARKLAGD (165 aa)). 21 to 28 (DGGTGKTT) provides a ligand contact to GTP. The switch-I stretch occupies residues 40–48 (KKYEPTIGV). Residues glycine 71, 125-128 (NKVD), and 153-155 (SAK) contribute to the GTP site. The segment at 71–87 (GQEKFGGLRDGYYIHGQ) is switch-II.

This sequence belongs to the small GTPase superfamily. Ran family. Found in a nuclear export complex with RanGTP, exportin and pre-miRNA.

Its subcellular location is the nucleus. Functionally, GTP-binding protein involved in nucleocytoplasmic transport. Required for the import of protein into the nucleus and also for RNA export. Involved in chromatin condensation and control of cell cycle. The chain is GTP-binding nuclear protein Ran-2 (RAN2) from Oryza sativa subsp. indica (Rice).